The primary structure comprises 341 residues: L-threonine 3-dehydrogenase (341 aa).

Zn(2+) is bound at residue C38. Active-site charge relay system residues include T40 and H43. Zn(2+) is bound by residues H63, E64, C93, C96, C99, and C107. Residues I175, D195, R200, 262-264 (LGI), and 286-287 (IY) contribute to the NAD(+) site.

The protein belongs to the zinc-containing alcohol dehydrogenase family. Homotetramer. Zn(2+) serves as cofactor.

The protein localises to the cytoplasm. It catalyses the reaction L-threonine + NAD(+) = (2S)-2-amino-3-oxobutanoate + NADH + H(+). It functions in the pathway amino-acid degradation; L-threonine degradation via oxydo-reductase pathway; glycine from L-threonine: step 1/2. Its function is as follows. Catalyzes the NAD(+)-dependent oxidation of L-threonine to 2-amino-3-ketobutyrate. This chain is L-threonine 3-dehydrogenase, found in Klebsiella pneumoniae subsp. pneumoniae (strain ATCC 700721 / MGH 78578).